The chain runs to 306 residues: Protein SULFUR DEFICIENCY-INDUCED 1 (306 aa).

TPR repeat units lie at residues 1 to 22 (MERS…NLMK), 71 to 104 (DSAL…CSKN), 107 to 140 (DSLD…IYQG), 167 to 200 (SRLL…EPDA), and 202 to 233 (KSCN…RVLG). Positions 72-139 (SALKDMAVVM…LKRKLRQIYQ (68 aa)) form a coiled coil. The stretch at 238–260 (RTRQRAEELLSELESSLPRMRDA) forms a coiled coil. The TPR 6 repeat unit spans residues 270 to 304 (LDDDFVLGLEEMTSTSFKSKRLPIFEQISSFRNTL).

This sequence belongs to the MS5 protein family.

The protein resides in the nucleus. Its function is as follows. Involved in the utilization of stored sulfate under sulfur-deficient conditions. This chain is Protein SULFUR DEFICIENCY-INDUCED 1, found in Arabidopsis thaliana (Mouse-ear cress).